Reading from the N-terminus, the 317-residue chain is Testis-expressed protein 19.2 (317 aa).

A compositionally biased stretch (acidic residues) spans 64–75; that stretch reads MELSEASSEPEE. The disordered stretch occupies residues 64–113; the sequence is MELSEASSEPEEWPGLSGGEGQGHLPHGISVSAGSGAQGPQPVPTELGPQ. Residues 101–145 form an important for interaction with piRNA region; that stretch reads QGPQPVPTELGPQEAVPLDLGPEDAEWTQALPWRFDGLSPCSHWL.

As to quaternary structure, interacts with UBR2. Interacts with piRNA-associated proteins DDX4, EDC4, MAEL, PIWIL1, PIWIL2, RANBP9 and TDRD6. In terms of tissue distribution, specifically expressed in somatic cells of male gonad lineage.

The protein localises to the cytoplasm. In terms of biological role, may be required during spermatogenesis, probably by participating in the repression of retrotransposable elements and prevent their mobilization. With its paralog, Tex19.1, collaborates with the Piwi-interacting RNA (piRNA) pathway, which mediates the repression of transposable elements during meiosis by forming complexes composed of piRNAs and Piwi proteins. Interacts with Piwi proteins and directly binds piRNAs, a class of 24 to 30 nucleotide RNAs that are generated by a Dicer-independent mechanism and are primarily derived from transposons and other repeated sequence elements. In Mus musculus (Mouse), this protein is Testis-expressed protein 19.2 (Tex19.2).